We begin with the raw amino-acid sequence, 218 residues long: Ribonuclease HII (218 aa).

Residues G12–L206 enclose the RNase H type-2 domain. A divalent metal cation contacts are provided by D18, E19, and D115.

The protein belongs to the RNase HII family. The cofactor is Mn(2+). Mg(2+) is required as a cofactor.

It localises to the cytoplasm. It catalyses the reaction Endonucleolytic cleavage to 5'-phosphomonoester.. In terms of biological role, endonuclease that specifically degrades the RNA of RNA-DNA hybrids. This Rhodospirillum rubrum (strain ATCC 11170 / ATH 1.1.1 / DSM 467 / LMG 4362 / NCIMB 8255 / S1) protein is Ribonuclease HII.